Consider the following 422-residue polypeptide: Nucleoside transporter 1 (422 aa).

At 1–38 (MSTGKESSKAYADIESRGDYKDDGKKGSTLSSKQHFML) the chain is on the cytoplasmic side. Residues 39-59 (SLTFILIGLSSLNVWNTALGL) form a helical membrane-spanning segment. Trp53 contributes to the inosine binding site. At 60–63 (NINF) the chain is on the extracellular side. Residues 64–82 (KYNTFQITGLVCSSIVALF) traverse the membrane as a helical segment. Residues 83-87 (VEIPK) are Cytoplasmic-facing. A helical membrane pass occupies residues 88–107 (IMLPFLLGGLSILCAGFQIS). At 108-116 (HSFFTDTQF) the chain is on the extracellular side. Residues 117–139 (DTYCLVAFIVIGVVAGLAQTIAF) form a helical membrane-spanning segment. Residue Gln135 coordinates inosine. The Cytoplasmic segment spans residues 140–149 (NIGSTMEDNM). A helical transmembrane segment spans residues 150-174 (GGYMSAGIGISGVFIFVINLLLDQF). Topologically, residues 175–185 (VSPEKHYGVNK) are extracellular. The helical transmembrane segment at 186–208 (AKLLYLYIICELCLILAIVFCVC) threads the bilayer. At 209 to 241 (NLDLTNKNNKKDEENKENNATLSYMELFKDSYK) the chain is on the cytoplasmic side. A helical membrane pass occupies residues 242 to 265 (AILTMFLVNWLTLQLFPGVGHKKW). The Extracellular segment spans residues 266–274 (QESHNISDY). Residues 275–294 (NVTIIVGMFQVFDFLSRYPP) form a helical membrane-spanning segment. 2 residues coordinate inosine: Asp287 and Arg291. Topologically, residues 295-309 (NLTHIKIFKNFTFSL) are cytoplasmic. The chain crosses the membrane as a helical span at residues 310–330 (NKLLVANSLRLLFIPWFILNA). The Extracellular segment spans residues 331 to 338 (CVDHPFFK). The helical transmembrane segment at 339-362 (NIVQQCVCMAMLAFTNGWFNTVPF) threads the bilayer. Over 363-374 (LVFVKELKKAKK) the chain is Cytoplasmic. A helical transmembrane segment spans residues 375-397 (KKEIEIISTFLVIAMFVGLFCGI). Residues 398–422 (WTTYIYNLFNIVLPKPDLPPIDVTQ) are Extracellular-facing.

The protein belongs to the SLC29A/ENT transporter (TC 2.A.57) family.

The protein localises to the cell membrane. It catalyses the reaction inosine(in) = inosine(out). It carries out the reaction adenosine(in) = adenosine(out). The catalysed reaction is hypoxanthine(out) = hypoxanthine(in). The enzyme catalyses guanosine(in) = guanosine(out). It catalyses the reaction guanine(out) = guanine(in). It carries out the reaction thymidine(in) = thymidine(out). The catalysed reaction is uridine(out) = uridine(in). The enzyme catalyses uracil(in) = uracil(out). It catalyses the reaction thymine(out) = thymine(in). It carries out the reaction adenine(out) = adenine(in). The catalysed reaction is cytosine(out) = cytosine(in). The enzyme catalyses xanthine(out) = xanthine(in). Its activity is regulated as follows. GSK4 (5-methyl-N-[2-(2-oxo-1-azepanyl)ethyl]-2-phenyl-1,3-oxazole-4-carbox-amide) disrupts the transport activity at 500 nM. Inhibited partially by 10 uM dipyridamole. Inhibited partially by N,N'-1,3-benzothiazole-2,6-diyldi(2-furamide), 2-bromo-N-(4-[1,3]oxazolo[4,5-b]pyridin-2-ylphenyl)benzamide, 4-methyl-7-[(3,4,5-trimethoxybenzyl)oxy]-2H-chromen-2-one, 2-(1-methyl-1H-indol-3-yl)-2-oxo-N-[4-(pyrrolidin-1-ylcarbonyl)phenyl]acet amide and 2-[2-(2-methylphenyl)vinyl]-4(3H)-quinazolinone. In terms of biological role, sodium-independent nucleoside and nucleobase transporter with a broad substrate specificity. Plays a key role in the utilization of host purine sources by P.falciparum during intraerythrocytic development enabling parasite growth in the presence of physiological concentrations of adenosine, inosine, guanine, guanosine, xanthine and hypoxanthine. Essential for parasite transition from ring to trophozoite or from trophozoite to schizont stage but not for erythrocyte invasion by merozoites. This chain is Nucleoside transporter 1, found in Plasmodium falciparum (isolate 3D7).